Here is a 241-residue protein sequence, read N- to C-terminus: 3-oxoacyl-[acyl-carrier-protein] reductase FabG (241 aa).

NADP(+) is bound by residues 13-16, Ser-38, 57-58, and Asn-83; these read GASG and EI. Ser-135 lines the substrate pocket. Tyr-148 serves as the catalytic Proton acceptor. NADP(+) is bound by residues 148-152 and Ile-181; that span reads YCASK.

The protein belongs to the short-chain dehydrogenases/reductases (SDR) family. Homotetramer.

It carries out the reaction a (3R)-hydroxyacyl-[ACP] + NADP(+) = a 3-oxoacyl-[ACP] + NADPH + H(+). Its pathway is lipid metabolism; fatty acid biosynthesis. Functionally, catalyzes the NADPH-dependent reduction of beta-ketoacyl-ACP substrates to beta-hydroxyacyl-ACP products, the first reductive step in the elongation cycle of fatty acid biosynthesis. The chain is 3-oxoacyl-[acyl-carrier-protein] reductase FabG (fabG) from Rickettsia felis (strain ATCC VR-1525 / URRWXCal2) (Rickettsia azadi).